The following is a 1357-amino-acid chain: DNA-directed RNA polymerase subunit beta (1357 aa).

Belongs to the RNA polymerase beta chain family. The RNAP catalytic core consists of 2 alpha, 1 beta, 1 beta' and 1 omega subunit. When a sigma factor is associated with the core the holoenzyme is formed, which can initiate transcription.

It carries out the reaction RNA(n) + a ribonucleoside 5'-triphosphate = RNA(n+1) + diphosphate. Its function is as follows. DNA-dependent RNA polymerase catalyzes the transcription of DNA into RNA using the four ribonucleoside triphosphates as substrates. The polypeptide is DNA-directed RNA polymerase subunit beta (Pseudomonas savastanoi pv. phaseolicola (strain 1448A / Race 6) (Pseudomonas syringae pv. phaseolicola (strain 1448A / Race 6))).